A 252-amino-acid chain; its full sequence is Ribonuclease 3 (252 aa).

An RNase III domain is found at leucine 3 to glycine 125. Glutamate 38 lines the Mg(2+) pocket. Aspartate 42 is an active-site residue. 2 residues coordinate Mg(2+): aspartate 111 and glutamate 114. Residue glutamate 114 is part of the active site. Positions aspartate 152–alanine 222 constitute a DRBM domain.

The protein belongs to the ribonuclease III family. Homodimer. Mg(2+) is required as a cofactor.

It localises to the cytoplasm. The enzyme catalyses Endonucleolytic cleavage to 5'-phosphomonoester.. In terms of biological role, digests double-stranded RNA. Involved in the processing of primary rRNA transcript to yield the immediate precursors to the large and small rRNAs (23S and 16S). Processes some mRNAs, and tRNAs when they are encoded in the rRNA operon. Processes pre-crRNA and tracrRNA of type II CRISPR loci if present in the organism. In Bordetella petrii (strain ATCC BAA-461 / DSM 12804 / CCUG 43448), this protein is Ribonuclease 3.